A 430-amino-acid chain; its full sequence is Adenylosuccinate synthetase (430 aa).

Residues 12-18 (GDEGKGK) and 40-42 (GHT) contribute to the GTP site. Catalysis depends on aspartate 13, which acts as the Proton acceptor. The Mg(2+) site is built by aspartate 13 and glycine 40. IMP is bound by residues 13–16 (DEGK), 38–41 (NAGH), threonine 128, arginine 142, glutamine 223, threonine 238, and arginine 302. Residue histidine 41 is the Proton donor of the active site. Residue 298 to 304 (TTTGRPR) coordinates substrate. GTP is bound by residues arginine 304, 330-332 (SID), and 412-414 (SVG).

This sequence belongs to the adenylosuccinate synthetase family. Homodimer. Mg(2+) serves as cofactor.

It is found in the cytoplasm. It catalyses the reaction IMP + L-aspartate + GTP = N(6)-(1,2-dicarboxyethyl)-AMP + GDP + phosphate + 2 H(+). Its pathway is purine metabolism; AMP biosynthesis via de novo pathway; AMP from IMP: step 1/2. Its function is as follows. Plays an important role in the de novo pathway of purine nucleotide biosynthesis. Catalyzes the first committed step in the biosynthesis of AMP from IMP. This is Adenylosuccinate synthetase from Streptococcus uberis (strain ATCC BAA-854 / 0140J).